A 101-amino-acid polypeptide reads, in one-letter code: Chaperone modulatory protein CbpM (101 aa).

The protein belongs to the CbpM family.

Functionally, interacts with CbpA and inhibits both the DnaJ-like co-chaperone activity and the DNA binding activity of CbpA. Together with CbpA, modulates the activity of the DnaK chaperone system. Does not inhibit the co-chaperone activity of DnaJ. The polypeptide is Chaperone modulatory protein CbpM (Salmonella agona (strain SL483)).